The following is a 438-amino-acid chain: Methylenetetrahydrofolate--tRNA-(uracil-5-)-methyltransferase TrmFO (438 aa).

9–14 provides a ligand contact to FAD; that stretch reads GGGLAG.

It belongs to the MnmG family. TrmFO subfamily. Requires FAD as cofactor.

The protein localises to the cytoplasm. It carries out the reaction uridine(54) in tRNA + (6R)-5,10-methylene-5,6,7,8-tetrahydrofolate + NADH + H(+) = 5-methyluridine(54) in tRNA + (6S)-5,6,7,8-tetrahydrofolate + NAD(+). The catalysed reaction is uridine(54) in tRNA + (6R)-5,10-methylene-5,6,7,8-tetrahydrofolate + NADPH + H(+) = 5-methyluridine(54) in tRNA + (6S)-5,6,7,8-tetrahydrofolate + NADP(+). Catalyzes the folate-dependent formation of 5-methyl-uridine at position 54 (M-5-U54) in all tRNAs. This Lactobacillus gasseri (strain ATCC 33323 / DSM 20243 / BCRC 14619 / CIP 102991 / JCM 1131 / KCTC 3163 / NCIMB 11718 / NCTC 13722 / AM63) protein is Methylenetetrahydrofolate--tRNA-(uracil-5-)-methyltransferase TrmFO.